The primary structure comprises 348 residues: Eukaryotic translation initiation factor 3 subunit H (348 aa).

The interval M1–A25 is disordered. Gly residues predominate over residues G9–K19. Residues V35–L169 enclose the MPN domain. The segment covering Q266 to Q285 has biased composition (low complexity). The disordered stretch occupies residues Q266–P304.

Belongs to the eIF-3 subunit H family. As to quaternary structure, component of the eukaryotic translation initiation factor 3 (eIF-3) complex, which is composed of 13 subunits: EIF3A, EIF3B, EIF3C, EIF3D, EIF3E, EIF3F, EIF3G, EIF3H, EIF3I, EIF3J, EIF3K, EIF3L and EIF3M.

The protein resides in the cytoplasm. In terms of biological role, component of the eukaryotic translation initiation factor 3 (eIF-3) complex, which is involved in protein synthesis of a specialized repertoire of mRNAs and, together with other initiation factors, stimulates binding of mRNA and methionyl-tRNAi to the 40S ribosome. The eIF-3 complex specifically targets and initiates translation of a subset of mRNAs involved in cell proliferation. This is Eukaryotic translation initiation factor 3 subunit H from Gallus gallus (Chicken).